The sequence spans 308 residues: Olfactory receptor 13H1 (308 aa).

The Extracellular portion of the chain corresponds to 1 to 25 (MAMDNVTAVFQFLLIGISNYPQWRD). Residue Asn5 is glycosylated (N-linked (GlcNAc...) asparagine). The helical transmembrane segment at 26–46 (TFFTLVLIIYLSTLLGNGFMI) threads the bilayer. Residues 47–54 (FLIHFDPN) are Cytoplasmic-facing. The chain crosses the membrane as a helical span at residues 55–75 (LHTPIYFFLSNLSFLDLCYGT). Residues 76-99 (ASMPQALVHCFSTHPYLSYPRCLA) lie on the Extracellular side of the membrane. A disulfide bond links Cys97 and Cys188. The helical transmembrane segment at 100 to 120 (QTSVSLALATAECLLLAAMAY) threads the bilayer. At 121-139 (DRVVAISNPLRYSVVMNGP) the chain is on the cytoplasmic side. The helical transmembrane segment at 140–159 (VCVCLVATSWGTSLVLTAML) threads the bilayer. Topologically, residues 160 to 196 (ILSLRLHFCGANVINHFACEILSLIKLTCSDTSLNEF) are extracellular. The chain crosses the membrane as a helical span at residues 197-216 (MILITSIFTLLLPFGFVLLS). Residues 217-236 (YIRIAMAIIRIRSLQGRLKA) are Cytoplasmic-facing. A helical transmembrane segment spans residues 237 to 257 (FTTCGSHLTVVTIFYGSAISM). Over 258 to 270 (YMKTQSKSYPDQD) the chain is Extracellular. A helical membrane pass occupies residues 271-291 (KFISVFYGALTPMLNPLIYSL). The Cytoplasmic segment spans residues 292–308 (RKKDVKRAIRKVMLKRT).

Belongs to the G-protein coupled receptor 1 family.

It is found in the cell membrane. Its function is as follows. Odorant receptor. The polypeptide is Olfactory receptor 13H1 (OR13H1) (Homo sapiens (Human)).